The sequence spans 89 residues: Small ribosomal subunit protein uS15 (89 aa).

This sequence belongs to the universal ribosomal protein uS15 family. Part of the 30S ribosomal subunit. Forms a bridge to the 50S subunit in the 70S ribosome, contacting the 23S rRNA.

Functionally, one of the primary rRNA binding proteins, it binds directly to 16S rRNA where it helps nucleate assembly of the platform of the 30S subunit by binding and bridging several RNA helices of the 16S rRNA. In terms of biological role, forms an intersubunit bridge (bridge B4) with the 23S rRNA of the 50S subunit in the ribosome. This chain is Small ribosomal subunit protein uS15, found in Pediococcus pentosaceus (strain ATCC 25745 / CCUG 21536 / LMG 10740 / 183-1w).